We begin with the raw amino-acid sequence, 199 residues long: 3-isopropylmalate dehydratase small subunit (199 aa).

This sequence belongs to the LeuD family. LeuD type 1 subfamily. Heterodimer of LeuC and LeuD.

The enzyme catalyses (2R,3S)-3-isopropylmalate = (2S)-2-isopropylmalate. The protein operates within amino-acid biosynthesis; L-leucine biosynthesis; L-leucine from 3-methyl-2-oxobutanoate: step 2/4. Its function is as follows. Catalyzes the isomerization between 2-isopropylmalate and 3-isopropylmalate, via the formation of 2-isopropylmaleate. This is 3-isopropylmalate dehydratase small subunit from Mycobacteroides abscessus (strain ATCC 19977 / DSM 44196 / CCUG 20993 / CIP 104536 / JCM 13569 / NCTC 13031 / TMC 1543 / L948) (Mycobacterium abscessus).